We begin with the raw amino-acid sequence, 427 residues long: tRNA(Ile)-lysidine synthase (427 aa).

Residue 25–30 participates in ATP binding; the sequence is SGGLDS.

This sequence belongs to the tRNA(Ile)-lysidine synthase family.

The protein resides in the cytoplasm. The enzyme catalyses cytidine(34) in tRNA(Ile2) + L-lysine + ATP = lysidine(34) in tRNA(Ile2) + AMP + diphosphate + H(+). In terms of biological role, ligates lysine onto the cytidine present at position 34 of the AUA codon-specific tRNA(Ile) that contains the anticodon CAU, in an ATP-dependent manner. Cytidine is converted to lysidine, thus changing the amino acid specificity of the tRNA from methionine to isoleucine. The protein is tRNA(Ile)-lysidine synthase of Histophilus somni (strain 129Pt) (Haemophilus somnus).